A 394-amino-acid polypeptide reads, in one-letter code: Elongation factor Tu (394 aa).

Positions 10–204 (KEHANIGTIG…AVDTYIPTPE (195 aa)) constitute a tr-type G domain. The G1 stretch occupies residues 19–26 (GHVDHGKT). 19–26 (GHVDHGKT) contributes to the GTP binding site. Thr-26 is a binding site for Mg(2+). Positions 60-64 (GITIN) are G2. Residues 81 to 84 (DCPG) form a G3 region. Residues 81–85 (DCPGH) and 136–139 (NKVD) each bind GTP. Residues 136–139 (NKVD) are G4. Residues 174–176 (SAL) form a G5 region.

Belongs to the TRAFAC class translation factor GTPase superfamily. Classic translation factor GTPase family. EF-Tu/EF-1A subfamily. Monomer.

Its subcellular location is the cytoplasm. It carries out the reaction GTP + H2O = GDP + phosphate + H(+). Functionally, GTP hydrolase that promotes the GTP-dependent binding of aminoacyl-tRNA to the A-site of ribosomes during protein biosynthesis. This chain is Elongation factor Tu, found in Staphylococcus aureus (strain COL).